The primary structure comprises 210 residues: Large ribosomal subunit protein uL3 (210 aa).

Residues 131–165 (GPMSHGSKYHRRVGSMGATTDPGRTFKGKKMPGRM) are disordered.

Belongs to the universal ribosomal protein uL3 family. In terms of assembly, part of the 50S ribosomal subunit. Forms a cluster with proteins L14 and L19.

One of the primary rRNA binding proteins, it binds directly near the 3'-end of the 23S rRNA, where it nucleates assembly of the 50S subunit. In Caldanaerobacter subterraneus subsp. tengcongensis (strain DSM 15242 / JCM 11007 / NBRC 100824 / MB4) (Thermoanaerobacter tengcongensis), this protein is Large ribosomal subunit protein uL3.